Here is a 430-residue protein sequence, read N- to C-terminus: MTNIVVVGLQWGDEGKGKVVDWLSNNADAVVRFQGGNNAGHTIVIQEKTYKLNLLPSSILHNNKLSIIGNGVVLDPYALMSEIDNLRINGININTQNLVISESCPLVLNIHKEADTLFEQLRQNTIGTTNKGIGPCYADKISRRALRVCDLFDKKDILYNKVNNLLNYHNLLRQNFNILPIEASKLVDELLDIAPKILPFVKPVWKVIHDLTQQNKTIIFEGAQGTFLDIDHGTYPFVTSSNTIAPQAFVGGGINLSHSSCILGVIKAYTTRVGNGPFFTEQKNEIGKSMFERGNEIGTVSNRERRCGWFDAVLAKQAIILSGVSGLVLTKLDVLDQFSEIKICTQYKYDGVIYDYIPASSYVQNNLEPIYETVPGWKENTFGSVTYEDLPKNAISYIKKIEEILKVPVYLISTGPERNAMIIINDKFLK.

GTP contacts are provided by residues 12–18 (GDEGKGK) and 40–42 (GHT). The active-site Proton acceptor is the Asp13. Residues Asp13 and Gly40 each coordinate Mg(2+). Residues 13–16 (DEGK), 38–41 (NAGH), Thr129, Arg143, Gln224, Thr239, and Arg303 contribute to the IMP site. The active-site Proton donor is His41. 299–305 (TVSNRER) is a substrate binding site. GTP is bound by residues Arg305, 331-333 (KLD), and 413-415 (STG).

This sequence belongs to the adenylosuccinate synthetase family. As to quaternary structure, homodimer. It depends on Mg(2+) as a cofactor.

It is found in the cytoplasm. The enzyme catalyses IMP + L-aspartate + GTP = N(6)-(1,2-dicarboxyethyl)-AMP + GDP + phosphate + 2 H(+). Its pathway is purine metabolism; AMP biosynthesis via de novo pathway; AMP from IMP: step 1/2. Plays an important role in the de novo pathway of purine nucleotide biosynthesis. Catalyzes the first committed step in the biosynthesis of AMP from IMP. The protein is Adenylosuccinate synthetase of Ehrlichia ruminantium (strain Gardel).